Here is a 438-residue protein sequence, read N- to C-terminus: GTPase Der (438 aa).

2 consecutive EngA-type G domains span residues 4 to 168 (PIVA…PAVP) and 176 to 351 (LKVA…EAAN). Residues 10-17 (GRPNVGKS), 57-61 (DTGGI), 120-123 (NKVE), 182-189 (GRPNVGKS), 229-233 (DTAGM), and 294-297 (NKWD) each bind GTP. A KH-like domain is found at 352-436 (RRVATGTLNA…PIRLIFRRGR (85 aa)).

The protein belongs to the TRAFAC class TrmE-Era-EngA-EngB-Septin-like GTPase superfamily. EngA (Der) GTPase family. In terms of assembly, associates with the 50S ribosomal subunit.

In terms of biological role, GTPase that plays an essential role in the late steps of ribosome biogenesis. The polypeptide is GTPase Der (Moorella thermoacetica (strain ATCC 39073 / JCM 9320)).